Here is a 429-residue protein sequence, read N- to C-terminus: Probable M18 family aminopeptidase 2 (429 aa).

Zn(2+) is bound by residues His-82, His-156, and His-401.

The protein belongs to the peptidase M18 family. Zn(2+) is required as a cofactor.

This Pseudomonas putida (strain GB-1) protein is Probable M18 family aminopeptidase 2.